The sequence spans 822 residues: General transcription factor 3C polypeptide 4 (822 aa).

N-acetylmethionine is present on Met-1. Residues 1 to 41 (MNTADQARVGPADDGPAPSGEEEGEGGGEAGGKEPAADAAP) form a disordered region. Phosphoserine is present on Ser-19. Residue Lys-225 forms a Glycyl lysine isopeptide (Lys-Gly) (interchain with G-Cter in SUMO2) linkage. Phosphoserine is present on residues Ser-604 and Ser-611. Residues 608–663 (LVDSPGMGNADDEQQEEGTSSKQVVKQGLQERSKEGDVEEPTDDSLPTTGDAGGRE) form a disordered region. Residue Lys-629 forms a Glycyl lysine isopeptide (Lys-Gly) (interchain with G-Cter in SUMO2) linkage. Residue Ser-652 is modified to Phosphoserine.

The protein belongs to the TFIIIC subunit 4 family. As to quaternary structure, part of the TFIIIC subcomplex TFIIIC2, consisting of six subunits, GTF3C1, GTF3C2, GTF3C3, GTF3C4, GTF3C5 and GTF3C6. Interacts with BRF1, GTF3C1, GTF3C2, GTF3C5, GTF3C6, POLR3C and POLR3F.

The protein localises to the nucleus. It carries out the reaction L-lysyl-[protein] + acetyl-CoA = N(6)-acetyl-L-lysyl-[protein] + CoA + H(+). Its function is as follows. Essential for RNA polymerase III to make a number of small nuclear and cytoplasmic RNAs, including 5S RNA, tRNA, and adenovirus-associated (VA) RNA of both cellular and viral origin. Has histone acetyltransferase activity (HAT) with unique specificity for free and nucleosomal H3. May cooperate with GTF3C5 in facilitating the recruitment of TFIIIB and RNA polymerase through direct interactions with BRF1, POLR3C and POLR3F. May be localized close to the A box. The polypeptide is General transcription factor 3C polypeptide 4 (GTF3C4) (Homo sapiens (Human)).